The sequence spans 141 residues: Auxin-responsive protein SAUR63 (141 aa).

It belongs to the ARG7 family. In terms of tissue distribution, expressed in hypocotyls, cotyledons, petioles, young rosette leaves, apical portion of inflorescence stems, stamen filaments and petals.

The protein resides in the cell membrane. Its function is as follows. May promote auxin-stimulated organ elongation, such as hypocotyls, stamen filaments and petals. The protein is Auxin-responsive protein SAUR63 of Arabidopsis thaliana (Mouse-ear cress).